Consider the following 501-residue polypeptide: NAD(P)H-quinone oxidoreductase chain 4, chloroplastic (501 aa).

A run of 14 helical transmembrane segments spans residues 4 to 24, 35 to 55, 87 to 107, 113 to 133, 134 to 154, 167 to 187, 211 to 231, 242 to 262, 274 to 294, 310 to 330, 331 to 351, 386 to 406, 416 to 436, and 464 to 484; these read FPWL…IPFF, YTLG…CYYF, IGLI…AWPV, LFYF…ASQD, ILLF…LLCI, FILY…TMGF, IILY…FPLH, HYST…YGLI, SIFA…AALI, ISHM…GLNG, AILQ…LAGI, LALP…GIVV, ILVT…LLSM, and IFIL…PNSV.

This sequence belongs to the complex I subunit 4 family.

The protein resides in the plastid. The protein localises to the chloroplast thylakoid membrane. It catalyses the reaction a plastoquinone + NADH + (n+1) H(+)(in) = a plastoquinol + NAD(+) + n H(+)(out). The catalysed reaction is a plastoquinone + NADPH + (n+1) H(+)(in) = a plastoquinol + NADP(+) + n H(+)(out). The polypeptide is NAD(P)H-quinone oxidoreductase chain 4, chloroplastic (Physcomitrium patens (Spreading-leaved earth moss)).